Consider the following 146-residue polypeptide: Glycosylation-dependent cell adhesion molecule 1 (146 aa).

An N-terminal signal peptide occupies residues 1–19 (MKFFTVLLFASLAATSLAA). The interval 25–112 (DELHLRTQPT…SAATSEGKLT (88 aa)) is disordered. The span at 48–60 (ISKESTSSKDLSK) shows a compositional bias: basic and acidic residues. Phosphoserine occurs at positions 54, 59, and 71. Polar residues predominate over residues 74 to 106 (NVGTESTKPQSQEAQDGLRSGSSQQEETTSAAT).

It belongs to the PP3/GlyCAM-1 family. In terms of processing, extensively O-glycosylated. Lymph nodes. Associated with the lumenal surface of the high endothelial venules of peripheral lymph nodes.

It is found in the cell membrane. Its function is as follows. Adhesion molecule that accomplishes cell binding by presenting carbohydrate(s) to the lectin domain of L-selectin. This Rattus norvegicus (Rat) protein is Glycosylation-dependent cell adhesion molecule 1 (Glycam1).